We begin with the raw amino-acid sequence, 891 residues long: UPF0182 protein Glov_0814 (891 aa).

The next 7 helical transmembrane spans lie at 6–26, 51–71, 102–122, 164–184, 202–222, 244–264, and 266–286; these read LTPI…LLAY, GIGV…LLYA, IGVL…ALQW, FMLL…GGIA, ILLA…GFGL, TLTT…FGLW, and GTWR…MIGM.

The protein belongs to the UPF0182 family.

The protein resides in the cell membrane. The chain is UPF0182 protein Glov_0814 from Trichlorobacter lovleyi (strain ATCC BAA-1151 / DSM 17278 / SZ) (Geobacter lovleyi).